The following is a 609-amino-acid chain: Alpha-glycerophosphate oxidase (609 aa).

21–49 (DLLVIGGGITGAGLTLQAAAAGMKVAVLE) contacts FAD.

It belongs to the FAD-dependent glycerol-3-phosphate dehydrogenase family. Requires FAD as cofactor.

The protein localises to the cytoplasm. The enzyme catalyses sn-glycerol 3-phosphate + O2 = dihydroxyacetone phosphate + H2O2. This is Alpha-glycerophosphate oxidase (glpO) from Lactococcus lactis subsp. lactis (strain IL1403) (Streptococcus lactis).